Reading from the N-terminus, the 383-residue chain is Glutamate 5-kinase (383 aa).

Lysine 17 contributes to the ATP binding site. The substrate site is built by serine 64, aspartate 151, and asparagine 165. Residue 185-186 (SD) participates in ATP binding. In terms of domain architecture, PUA spans 291-367 (SGTIRVDAGA…DEIEGILGYN (77 aa)).

This sequence belongs to the glutamate 5-kinase family.

It localises to the cytoplasm. It carries out the reaction L-glutamate + ATP = L-glutamyl 5-phosphate + ADP. The protein operates within amino-acid biosynthesis; L-proline biosynthesis; L-glutamate 5-semialdehyde from L-glutamate: step 1/2. Functionally, catalyzes the transfer of a phosphate group to glutamate to form L-glutamate 5-phosphate. This Methanosarcina barkeri (strain Fusaro / DSM 804) protein is Glutamate 5-kinase.